We begin with the raw amino-acid sequence, 427 residues long: Outer capsid protein P8 (427 aa).

It belongs to the phytoreovirus outer capsid protein P8 family. Homotrimer. Homomultimer.

It is found in the virion. Its subcellular location is the host cytoplasm. In terms of biological role, capsid protein which self-assembles to form the outer icosahedral capsid with a T=13 symmetry, about 70 nm in diameter and consisting of 780 molecules capsid proteins. This is Outer capsid protein P8 from Catharanthus roseus (Madagascar periwinkle).